We begin with the raw amino-acid sequence, 295 residues long: Ethanolamine ammonia-lyase small subunit (295 aa).

Adenosylcob(III)alamin contacts are provided by Val-207, Glu-228, and Cys-258.

The protein belongs to the EutC family. As to quaternary structure, the basic unit is a heterodimer which dimerizes to form tetramers. The heterotetramers trimerize; 6 large subunits form a core ring with 6 small subunits projecting outwards. Adenosylcob(III)alamin serves as cofactor.

Its subcellular location is the bacterial microcompartment. It catalyses the reaction ethanolamine = acetaldehyde + NH4(+). The protein operates within amine and polyamine degradation; ethanolamine degradation. Its function is as follows. Catalyzes the deamination of various vicinal amino-alcohols to oxo compounds. Allows this organism to utilize ethanolamine as the sole source of nitrogen and carbon in the presence of external vitamin B12. This is Ethanolamine ammonia-lyase small subunit from Escherichia coli (strain SMS-3-5 / SECEC).